The chain runs to 439 residues: Xaa-Pro dipeptidase (439 aa).

Residues aspartate 244, aspartate 255, histidine 335, glutamate 380, and glutamate 419 each coordinate Mn(2+).

Belongs to the peptidase M24B family. Bacterial-type prolidase subfamily. It depends on Mn(2+) as a cofactor.

It catalyses the reaction Xaa-L-Pro dipeptide + H2O = an L-alpha-amino acid + L-proline. Splits dipeptides with a prolyl residue in the C-terminal position. The sequence is that of Xaa-Pro dipeptidase from Shewanella sediminis (strain HAW-EB3).